The following is a 238-amino-acid chain: Photosynthetic NDH subunit of lumenal location 1, chloroplastic (238 aa).

It belongs to the PsbP family. As to quaternary structure, part of the chloroplast NDH complex, composed of a mixture of chloroplast and nucleus encoded subunits. Component of the NDH lumenal subcomplex, at least composed of PnsL1, PnsL2, PnsL3, PnsL4 and PnsL5.

The protein resides in the plastid. It is found in the chloroplast thylakoid membrane. NDH shuttles electrons from NAD(P)H:plastoquinone, via FMN and iron-sulfur (Fe-S) centers, to quinones in the photosynthetic chain and possibly in a chloroplast respiratory chain. The immediate electron acceptor for the enzyme in this species is believed to be plastoquinone. Couples the redox reaction to proton translocation, and thus conserves the redox energy in a proton gradient. Required for accumulation of the chloroplast NAD(P)H dehydrogenase (NDH) complex. The chain is Photosynthetic NDH subunit of lumenal location 1, chloroplastic from Arabidopsis thaliana (Mouse-ear cress).